We begin with the raw amino-acid sequence, 224 residues long: UPF0758 protein mma_2551 (224 aa).

The MPN domain occupies 102 to 224; sequence SLNSPQAVKK…VYSFAEHGHL (123 aa). Histidine 173, histidine 175, and aspartate 186 together coordinate Zn(2+). The JAMM motif motif lies at 173–186; that stretch reads HNHPSGSSEPSAAD.

Belongs to the UPF0758 family.

This is UPF0758 protein mma_2551 from Janthinobacterium sp. (strain Marseille) (Minibacterium massiliensis).